The chain runs to 96 residues: Small ribosomal subunit protein bS6 (96 aa).

It belongs to the bacterial ribosomal protein bS6 family.

Functionally, binds together with bS18 to 16S ribosomal RNA. The sequence is that of Small ribosomal subunit protein bS6 from Corynebacterium aurimucosum (strain ATCC 700975 / DSM 44827 / CIP 107346 / CN-1) (Corynebacterium nigricans).